A 187-amino-acid polypeptide reads, in one-letter code: uncharacterized protein (187 aa).

Residues 127–172 (KQPQVTLTQLQEELDEAKTRLALKEKELLEALSEISKLRLQLSNQL) are a coiled coil.

This is an uncharacterized protein from Tomato torrado virus (isolate Solanum lycopersicum/Spain/PRIToTV0301/-) (ToTV).